An 88-amino-acid polypeptide reads, in one-letter code: Toxin ICK-12 (88 aa).

The N-terminal stretch at 1-19 (MKSIVYMLLFCTFTVVILG) is a signal peptide. 4 cysteine pairs are disulfide-bonded: Cys-41–Cys-55, Cys-41–Cys-78, Cys-54–Cys-67, and Cys-81–Cys-88.

It belongs to the neurotoxin 27 (Jztx-72) family. ICK-41 subfamily. As to expression, expressed by the venom gland.

The protein resides in the secreted. Probable neurotoxin with ion channel impairing activity. This chain is Toxin ICK-12, found in Trittame loki (Brush-footed trapdoor spider).